Here is a 1771-residue protein sequence, read N- to C-terminus: Kinase D-interacting substrate of 220 kDa (1771 aa).

The Cytoplasmic portion of the chain corresponds to 1 to 499; it reads MSVLISQSVI…QIEPLFQFSW (499 aa). ANK repeat units follow at residues 4–33, 37–66, 70–99, 103–132, 136–165, 169–198, 202–231, 235–264, 268–297, 301–330, 334–363, and 367–396; these read LISQ…DVDE, CGQT…NCNL, DNWT…NLEH, GGWT…NPSV, YSVY…KVNC, YGTT…DVDQ, NSMT…NVNL, DGNT…YVNI, SGDT…DIDI, DNKT…DTEI, DGET…KVSA, and KGDT…DGRL. The KAP NTPase domain occupies 440 to 953; that stretch reads YDLYSSALAD…NIVSVTGRLL (514 aa). The chain crosses the membrane as a helical span at residues 500–520; sequence LIVFLTLLLCGGLGLLFAFTV. The Extracellular portion of the chain corresponds to 521 to 524; that stretch reads HPNL. Residues 525 to 545 form a helical membrane-spanning segment; that stretch reads GIAVSLSFLALLYIFFIVIYF. Residues 546 to 659 are Cytoplasmic-facing; the sequence is GGRREGESWN…KWKKTCCLPS (114 aa). The chain crosses the membrane as a helical span at residues 660–680; that stretch reads FVIFLFIIGCIISGITLLAIF. The Extracellular segment spans residues 681–685; that stretch reads RVDPK. The helical transmembrane segment at 686 to 706 threads the bilayer; it reads HLTVNAVLISIASVVGLAFVL. Over 707-1771 the chain is Cytoplasmic; sequence NCRTWWQVLD…GFGEERESIL (1065 aa). A phosphoserine mark is found at S882 and S885. A Phosphothreonine modification is found at T914. S918 is subject to Phosphoserine. The tract at residues 1089 to 1092 is mediates interaction with CRKL; sequence PRAP. Position 1163 is a phosphoserine (S1163). Disordered stretches follow at residues 1182–1202, 1285–1310, 1344–1368, and 1397–1564; these read DAAE…PAPG, PEDP…RASH, RHSN…SQDS, and LEGG…EPIR. 6 positions are modified to phosphoserine: S1296, S1352, S1359, S1361, S1362, and S1365. Positions 1346–1358 are enriched in polar residues; sequence SNLSWQSQTRRTP. Residues 1359–1368 are compositionally biased toward low complexity; the sequence is SLSSLNSQDS. The span at 1403–1430 shows a compositional bias: polar residues; the sequence is STTISGRSSPHSTYYMGQSSSGGSIHSN. A compositionally biased stretch (basic and acidic residues) spans 1431–1457; sequence LEQEKGKDSEPKPDDGRKSFLMKRGDV. The segment covering 1460-1470 has biased composition (polar residues); the sequence is YSSSGVSTNDA. 4 positions are modified to phosphoserine: S1521, S1526, S1555, and S1574. Residues 1522–1532 show a composition bias toward acidic residues; the sequence is DEDESGTEESD. Over residues 1537-1561 the composition is skewed to basic and acidic residues; it reads LKDDKDRKAEGKVERVPKSPEHSAE. Positions 1578-1633 are disordered; that stretch reads LDKKDSSDSGVRSSESSPNHSLHNEVADDSQLEKANLIELEDDSHSGKRGIPHSLS. Residues 1585–1594 are compositionally biased toward low complexity; sequence DSGVRSSESS. S1623 and S1633 each carry phosphoserine. Residue T1679 is modified to Phosphothreonine. S1681 is modified (phosphoserine). T1684 bears the Phosphothreonine mark. Over residues 1713–1731 the composition is skewed to polar residues; that stretch reads LRPSSSPNPTTIQNENLKS. Residues 1713–1771 are disordered; the sequence is LRPSSSPNPTTIQNENLKSMTHKRSQRSSYTRLSKDPPELHAAASSESTGFGEERESIL. Positions 1766–1771 match the PDZ-binding motif; sequence ERESIL.

Found in a complex, at least composed of KIDINS220, MAGI2, NTRK1 and RAPGEF2; the complex is mainly formed at late endosomes in a nerve growth factor (NGF)-dependent manner. Interacts with RAPGEF2; the interaction is strengthened after NGF stimulation. Isoform 2 interacts (via C-terminal domain) with MAGI2 isoform 1 (via PDZ domain). Interacts with NTRK1, NTRK2, NTRK3, ERKL and NGFR. Can form a ternary complex with NGFR and NTRK1 and this complex is affected by the expression levels of KIDINS220/ARMS. An increase in KIDINS220/ARMS expression leads to a decreased association of NGFR and NTRK1. Interacts (via PDZ-binding motif) with SNTA1 and SNTB2 (via PDZ domains). Interacts with EPHA4 and PRKD1. Post-translationally, tyrosine phosphorylated by NTRK1, NTRK2, EPHB2 and EPHA4. Phosphorylation at Ser-918 is induced by phorbol ester treatment. Phosphorylation by NTRK2 is induced by brain-derived neurotrophic factor (BDNF) and neurotrophin-4/5. Phosphorylation by NTRK1 is induced by nerve growth factor (NGF). In terms of tissue distribution, abundant in developing and adult neural tissues as well as neuroendocrine cells and dendritic cells. Overexpressed in melanoma and melanoma cell lines.

It is found in the membrane. Its subcellular location is the late endosome. In terms of biological role, promotes a prolonged MAP-kinase signaling by neurotrophins through activation of a Rap1-dependent mechanism. Provides a docking site for the CRKL-C3G complex, resulting in Rap1-dependent sustained ERK activation. May play an important role in regulating postsynaptic signal transduction through the syntrophin-mediated localization of receptor tyrosine kinases such as EPHA4. In cooperation with SNTA1 can enhance EPHA4-induced JAK/STAT activation. Plays a role in nerve growth factor (NGF)-induced recruitment of RAPGEF2 to late endosomes and neurite outgrowth. May play a role in neurotrophin- and ephrin-mediated neuronal outgrowth and in axon guidance during neural development and in neuronal regeneration. Modulates stress-induced apoptosis of melanoma cells via regulation of the MEK/ERK signaling pathway. This chain is Kinase D-interacting substrate of 220 kDa (KIDINS220), found in Homo sapiens (Human).